We begin with the raw amino-acid sequence, 297 residues long: Ribosomal RNA small subunit methyltransferase H (297 aa).

S-adenosyl-L-methionine-binding positions include 30-32 (GGY), Asp48, Phe75, Asp96, and Gln103.

It belongs to the methyltransferase superfamily. RsmH family.

The protein localises to the cytoplasm. The enzyme catalyses cytidine(1402) in 16S rRNA + S-adenosyl-L-methionine = N(4)-methylcytidine(1402) in 16S rRNA + S-adenosyl-L-homocysteine + H(+). Specifically methylates the N4 position of cytidine in position 1402 (C1402) of 16S rRNA. This chain is Ribosomal RNA small subunit methyltransferase H, found in Ehrlichia chaffeensis (strain ATCC CRL-10679 / Arkansas).